Consider the following 109-residue polypeptide: Protein TAR1 (109 aa).

Positions 62–109 are disordered; the sequence is HFTNNWDPRHTGFSPSMTSCSKEHRQGPATKLPSSNYNSDVEDARFQI.

The protein localises to the mitochondrion. In terms of biological role, may be involved in mtDNA stability or mitochondrial gene expression regulation at the post-transcriptional level. The protein is Protein TAR1 (TAR1-A) of Kluyveromyces lactis (strain ATCC 8585 / CBS 2359 / DSM 70799 / NBRC 1267 / NRRL Y-1140 / WM37) (Yeast).